Reading from the N-terminus, the 241-residue chain is tRNA pseudouridine synthase A (241 aa).

The Nucleophile role is filled by Asp-52. Substrate is bound at residue Tyr-110.

The protein belongs to the tRNA pseudouridine synthase TruA family. As to quaternary structure, homodimer.

It carries out the reaction uridine(38/39/40) in tRNA = pseudouridine(38/39/40) in tRNA. Its function is as follows. Formation of pseudouridine at positions 38, 39 and 40 in the anticodon stem and loop of transfer RNAs. The sequence is that of tRNA pseudouridine synthase A from Aquifex aeolicus (strain VF5).